The following is a 331-amino-acid chain: Polysaccharide lyase (331 aa).

A signal peptide spans Met1–Ala22. Residue Cys23 is the site of N-palmitoyl cysteine attachment. Residue Cys23 is the site of S-diacylglycerol cysteine attachment.

It belongs to the polysaccharide lyase 5 family.

It is found in the cell outer membrane. The catalysed reaction is Eliminative cleavage of alginate to give oligosaccharides with 4-deoxy-alpha-L-erythro-hex-4-enuronosyl groups at their non-reducing ends and beta-D-mannuronate at their reducing end.. It carries out the reaction [hyaluronan](n) = n 3-(4-deoxy-beta-D-gluc-4-enuronosyl)-N-acetyl-D-glucosamine + H2O. The enzyme catalyses Eliminative cleavage of (1-&gt;4)-beta-D-glucuronans to give oligosaccharides with 4-deoxy-beta-D-gluc-4-enuronosyl groups at their non-reducing ends. Complete degradation of glucuronans results in the formation of tetrasaccharides.. Is inhibited by mono- and divalent cations as well as L-ascorbic acid 6-hexadecanoate. Polysaccharide lyase that catalyzes the depolymerization of several anionic polysaccharides via a beta-elimination mechanism. Exhibits broad substrate specificity, catalyzing the degradation of not only alginate and poly-beta-D-mannuronate (poly-ManA), but poly-beta-D-glucuronate (poly-GlcA or poly-GlcUA) and hyaluronate (HA) as well. The oligosaccharide products formed by enzymatic cleavage are comprised mainly of disaccharides, with a lower abundance of trimers and pentamers. Is not active on poly-D-galacturonate, heparin and heparin sulfate. This Stenotrophomonas maltophilia (strain K279a) protein is Polysaccharide lyase.